The chain runs to 192 residues: Orotate phosphoribosyltransferase (192 aa).

116-124 (EDIVTTGLS) provides a ligand contact to 5-phospho-alpha-D-ribose 1-diphosphate. Thr-120 and Arg-148 together coordinate orotate.

The protein belongs to the purine/pyrimidine phosphoribosyltransferase family. PyrE subfamily. As to quaternary structure, homodimer. Requires Mg(2+) as cofactor.

The catalysed reaction is orotidine 5'-phosphate + diphosphate = orotate + 5-phospho-alpha-D-ribose 1-diphosphate. It functions in the pathway pyrimidine metabolism; UMP biosynthesis via de novo pathway; UMP from orotate: step 1/2. Its function is as follows. Catalyzes the transfer of a ribosyl phosphate group from 5-phosphoribose 1-diphosphate to orotate, leading to the formation of orotidine monophosphate (OMP). The protein is Orotate phosphoribosyltransferase of Bartonella tribocorum (strain CIP 105476 / IBS 506).